The chain runs to 203 residues: N-(5'-phosphoribosyl)anthranilate isomerase (203 aa).

The protein belongs to the TrpF family.

The catalysed reaction is N-(5-phospho-beta-D-ribosyl)anthranilate = 1-(2-carboxyphenylamino)-1-deoxy-D-ribulose 5-phosphate. Its pathway is amino-acid biosynthesis; L-tryptophan biosynthesis; L-tryptophan from chorismate: step 3/5. This Geotalea uraniireducens (strain Rf4) (Geobacter uraniireducens) protein is N-(5'-phosphoribosyl)anthranilate isomerase.